Consider the following 360-residue polypeptide: Peptide chain release factor 1 (360 aa).

Q235 is modified (N5-methylglutamine). Positions Q284–T293 are enriched in basic and acidic residues. The disordered stretch occupies residues Q284–D305.

Belongs to the prokaryotic/mitochondrial release factor family. In terms of processing, methylated by PrmC. Methylation increases the termination efficiency of RF1.

It is found in the cytoplasm. Its function is as follows. Peptide chain release factor 1 directs the termination of translation in response to the peptide chain termination codons UAG and UAA. The protein is Peptide chain release factor 1 of Pectobacterium carotovorum subsp. carotovorum (strain PC1).